An 836-amino-acid chain; its full sequence is Protein AKNAD1 (836 aa).

3 stretches are compositionally biased toward polar residues: residues 159-172 (SWPK…TDQL), 181-192 (SNKPGSATTTEE), and 227-248 (SYQG…NTFK). 2 disordered regions span residues 159-248 (SWPK…NTFK) and 303-325 (LETT…KITE). Positions 311–323 (CVEKQHQEQKGKI) are enriched in basic and acidic residues. A coiled-coil region spans residues 372-484 (QKISQGKQMC…DVKEKMDESK (113 aa)). Disordered regions lie at residues 510 to 545 (SNEI…EAPN) and 575 to 596 (MRLS…DCAE).

Belongs to the AKNA family.

This is Protein AKNAD1 (AKNAD1) from Homo sapiens (Human).